A 926-amino-acid chain; its full sequence is Alpha-aminoadipic semialdehyde synthase, mitochondrial (926 aa).

Residues 1-27 (MLRVSRTKLGRLSPSLSRGLHHKAVMA) constitute a mitochondrion transit peptide. The lysine-ketoglutarate reductase stretch occupies residues 28–455 (LRREDVNAWE…DAVIASNGML (428 aa)). N6-acetyllysine is present on residues lysine 48 and lysine 56. Lysine 93 carries the post-translational modification N6-acetyllysine; alternate. The residue at position 93 (lysine 93) is an N6-succinyllysine; alternate. The residue at position 128 (lysine 128) is an N6-acetyllysine. Lysine 138 is subject to N6-acetyllysine; alternate. N6-succinyllysine; alternate is present on lysine 138. At lysine 274 the chain carries N6-succinyllysine. Lysine 286 bears the N6-acetyllysine; alternate mark. Position 286 is an N6-succinyllysine; alternate (lysine 286). At lysine 333 the chain carries N6-succinyllysine. An N6-acetyllysine; alternate modification is found at lysine 458. Residue lysine 458 is modified to N6-succinyllysine; alternate. Positions 477–926 (MGTKKKVLVL…MYTTQSTIKL (450 aa)) are saccharopine dehydrogenase. Residues serine 488, aspartate 512, and glutamine 516 each contribute to the NAD(+) site. An N6-acetyllysine; alternate mark is found at lysine 523 and lysine 535. N6-succinyllysine; alternate occurs at positions 523 and 535. NAD(+)-binding residues include leucine 554, alanine 576, and serine 577. 577-578 (SY) contributes to the L-saccharopine binding site. Lysine 584 is subject to N6-acetyllysine; alternate. Lysine 584 bears the N6-succinyllysine; alternate mark. Residues leucine 603, aspartate 604, and proline 605 each contribute to the NAD(+) site. Residue aspartate 604 coordinates L-saccharopine. Arginine 703 is an L-saccharopine binding site. Lysine 707 is modified (N6-acetyllysine). L-saccharopine is bound at residue 724–726 (TLR). Lysine 732 carries the post-translational modification N6-succinyllysine. Lysine 739 is modified (N6-acetyllysine). At lysine 761 the chain carries N6-acetyllysine; alternate. Lysine 761 carries the N6-succinyllysine; alternate modification. Lysine 780 bears the N6-acetyllysine mark.

This sequence in the N-terminal section; belongs to the AlaDH/PNT family. It in the C-terminal section; belongs to the saccharopine dehydrogenase family. As to quaternary structure, homotetramer.

It is found in the mitochondrion. It catalyses the reaction L-saccharopine + NADP(+) + H2O = L-lysine + 2-oxoglutarate + NADPH + H(+). The enzyme catalyses L-saccharopine + NAD(+) + H2O = (S)-2-amino-6-oxohexanoate + L-glutamate + NADH + H(+). It participates in amino-acid degradation; L-lysine degradation via saccharopine pathway; glutaryl-CoA from L-lysine: step 1/6. Its pathway is amino-acid degradation; L-lysine degradation via saccharopine pathway; glutaryl-CoA from L-lysine: step 2/6. Functionally, bifunctional enzyme that catalyzes the first two steps in lysine degradation. The polypeptide is Alpha-aminoadipic semialdehyde synthase, mitochondrial (Bos taurus (Bovine)).